A 294-amino-acid polypeptide reads, in one-letter code: Acetylglutamate kinase (294 aa).

Substrate contacts are provided by residues 60 to 61, Arg82, and Asn186; that span reads GG.

It belongs to the acetylglutamate kinase family. ArgB subfamily.

Its subcellular location is the cytoplasm. It carries out the reaction N-acetyl-L-glutamate + ATP = N-acetyl-L-glutamyl 5-phosphate + ADP. Its pathway is amino-acid biosynthesis; L-arginine biosynthesis; N(2)-acetyl-L-ornithine from L-glutamate: step 2/4. In terms of biological role, catalyzes the ATP-dependent phosphorylation of N-acetyl-L-glutamate. The chain is Acetylglutamate kinase from Methanospirillum hungatei JF-1 (strain ATCC 27890 / DSM 864 / NBRC 100397 / JF-1).